The sequence spans 173 residues: Large ribosomal subunit protein uL5 (173 aa).

The protein belongs to the universal ribosomal protein uL5 family. In terms of assembly, part of the 50S ribosomal subunit; contacts the 5S rRNA and probably tRNA. Forms a bridge to the 30S subunit in the 70S ribosome.

This is one of the proteins that bind and probably mediate the attachment of the 5S RNA into the large ribosomal subunit, where it forms part of the central protuberance. In the 70S ribosome it contacts protein S13 of the 30S subunit (bridge B1b), connecting the 2 subunits; this bridge is implicated in subunit movement. May contact the P site tRNA; the 5S rRNA and some of its associated proteins might help stabilize positioning of ribosome-bound tRNAs. This is Large ribosomal subunit protein uL5 from Nitrosopumilus maritimus (strain SCM1).